The sequence spans 706 residues: Putative pentatricopeptide repeat-containing protein At3g47840 (706 aa).

PPR repeat units follow at residues 39–69, 70–104, 107–141, 142–172, 173–203, 208–242, 243–273, 274–308, 309–343, 344–374, 375–409, 410–444, 445–475, 476–510, 511–541, and 547–577; these read VKFDPNSHLRSLINAGNLRAARQVFDKMPHG, DIVSWTSIIKRYVTANNSDEALILFSAMRVVDHAV, DTSVLSVVLKACGQSSNIAYGESLHAYAVKTSLLS, SVYVGSSLLDMYKRVGKIDKSCRVFSEMPFR, NAVTWTAIITGLVHAGRYKEGLTYFSEMSRS, DTYTFAIALKACAGLRQVKYGKAIHTHVIVRGFVT, TLCVANSLATMYTECGEMQDGLCLFENMSER, DVVSWTSLIVAYKRIGQEVKAVETFIKMRNSQVPP, NEQTFASMFSACASLSRLVWGEQLHCNVLSLGLND, SLSVSNSMMKMYSTCGNLVSASVLFQGMRCR, DIISWSTIIGGYCQAGFGEEGFKYFSWMRQSGTKP, TDFALASLLSVSGNMAVIEGGRQVHALALCFGLEQ, NSTVRSSLINMYSKCGSIKEASMIFGETDRD, DIVSLTAMINGYAEHGKSKEAIDLFEKSLKVGFRP, DSVTFISVLTACTHSGQLDLGFHYFNMMQET, and AKEHYGCMVDLLCRAGRLSDAEKMINEMSWK. Residues 582-657 are type E motif; that stretch reads VWTTLLIACK…EPGWSSIKIK (76 aa). A type E(+) motif region spans residues 658 to 688; the sequence is DCVSAFVSGDRFHPQSEDIYNILELAVSGAE.

The protein belongs to the PPR family. PCMP-E subfamily.

This is Putative pentatricopeptide repeat-containing protein At3g47840 (PCMP-E43) from Arabidopsis thaliana (Mouse-ear cress).